Consider the following 251-residue polypeptide: Hydroxyacylglutathione hydrolase (251 aa).

Zn(2+) is bound by residues His53, His55, Asp57, His58, His110, Asp127, and His165.

Belongs to the metallo-beta-lactamase superfamily. Glyoxalase II family. Monomer. It depends on Zn(2+) as a cofactor.

It catalyses the reaction an S-(2-hydroxyacyl)glutathione + H2O = a 2-hydroxy carboxylate + glutathione + H(+). Its pathway is secondary metabolite metabolism; methylglyoxal degradation; (R)-lactate from methylglyoxal: step 2/2. Thiolesterase that catalyzes the hydrolysis of S-D-lactoyl-glutathione to form glutathione and D-lactic acid. The protein is Hydroxyacylglutathione hydrolase of Escherichia coli O6:K15:H31 (strain 536 / UPEC).